We begin with the raw amino-acid sequence, 254 residues long: UDP-2,3-diacylglucosamine hydrolase (254 aa).

Residues D8, H10, D41, N79, and H114 each coordinate Mn(2+). 79–80 (NR) contributes to the substrate binding site. Substrate contacts are provided by D122, S160, N164, K167, and H195. H195 and H197 together coordinate Mn(2+).

Belongs to the LpxH family. Requires Mn(2+) as cofactor.

It is found in the cell inner membrane. The enzyme catalyses UDP-2-N,3-O-bis[(3R)-3-hydroxytetradecanoyl]-alpha-D-glucosamine + H2O = 2-N,3-O-bis[(3R)-3-hydroxytetradecanoyl]-alpha-D-glucosaminyl 1-phosphate + UMP + 2 H(+). It functions in the pathway glycolipid biosynthesis; lipid IV(A) biosynthesis; lipid IV(A) from (3R)-3-hydroxytetradecanoyl-[acyl-carrier-protein] and UDP-N-acetyl-alpha-D-glucosamine: step 4/6. Hydrolyzes the pyrophosphate bond of UDP-2,3-diacylglucosamine to yield 2,3-diacylglucosamine 1-phosphate (lipid X) and UMP by catalyzing the attack of water at the alpha-P atom. Involved in the biosynthesis of lipid A, a phosphorylated glycolipid that anchors the lipopolysaccharide to the outer membrane of the cell. This is UDP-2,3-diacylglucosamine hydrolase from Aeromonas salmonicida (strain A449).